The sequence spans 145 residues: Large ribosomal subunit protein uL13 (145 aa).

This sequence belongs to the universal ribosomal protein uL13 family. In terms of assembly, part of the 50S ribosomal subunit. Interacts weakly with proteins L3 and L6.

Its function is as follows. This protein is one of the early assembly proteins of the 50S ribosomal subunit. Binds to 23S rRNA. This chain is Large ribosomal subunit protein uL13, found in Haloarcula marismortui (strain ATCC 43049 / DSM 3752 / JCM 8966 / VKM B-1809) (Halobacterium marismortui).